The chain runs to 95 residues: Co-chaperonin GroES (95 aa).

It belongs to the GroES chaperonin family. In terms of assembly, heptamer of 7 subunits arranged in a ring. Interacts with the chaperonin GroEL.

Its subcellular location is the cytoplasm. Its function is as follows. Together with the chaperonin GroEL, plays an essential role in assisting protein folding. The GroEL-GroES system forms a nano-cage that allows encapsulation of the non-native substrate proteins and provides a physical environment optimized to promote and accelerate protein folding. GroES binds to the apical surface of the GroEL ring, thereby capping the opening of the GroEL channel. The polypeptide is Co-chaperonin GroES (Chlorobium phaeobacteroides (strain BS1)).